A 339-amino-acid polypeptide reads, in one-letter code: NADP-dependent dehydrogenase M3 (339 aa).

Residues S49, I51, D93, Y206, K210, I240, and Q244 each contribute to the NADP(+) site. The active-site Proton acceptor is Y206. Catalysis depends on K210, which acts as the Lowers pKa of active site Tyr.

Belongs to the short-chain dehydrogenases/reductases (SDR) family. In terms of assembly, homodimer.

The protein localises to the cytoplasm. It is found in the cytosol. It participates in secondary metabolite biosynthesis. Functionally, NADP-dependent dehydrogenase; part of the gene cluster that mediates the biosynthesis of squalestatin S1 (SQS1, also known as zaragozic acid A), a heavily oxidized fungal polyketide that offers potent cholesterol lowering activity by targeting squalene synthase (SS). SQS1 is composed of a 2,8-dioxobicyclic[3.2.1]octane-3,4,5-tricarboxyclic acid core that is connected to two lipophilic polyketide arms. These initial steps feature the priming of an unusual benzoic acid starter unit onto the highly reducing polyketide synthase pks2, followed by oxaloacetate extension and product release to generate a tricarboxylic acid containing product. The phenylalanine ammonia lyase (PAL) M7 and the acyl-CoA ligase M9 are involved in transforming phenylalanine into benzoyl-CoA. The citrate synthase-like protein R3 is involved in connecting the C-alpha-carbons of the hexaketide chain and oxaloacetate to afford the tricarboxylic acid unit. The potential hydrolytic enzymes, M8 and M10, are in close proximity to pks2 and may participate in product release. On the other side, the tetraketide arm is synthesized by a the squalestatin tetraketide synthase pks1 and enzymatically esterified to the core in the last biosynthetic step, by the acetyltransferase M4. The biosynthesis of the tetraketide must involve 3 rounds of chain extension. After the first and second rounds methyl-transfer occurs, and in all rounds of extension the ketoreductase and dehydratase are active. The enoyl reductase and C-MeT of pks1 are not active in the final round of extension. The acetyltransferase M4 appears to have a broad substrate selectivity for its acyl CoA substrate, allowing the in vitro synthesis of novel squalestatins. The biosynthesis of SQS1 requires several oxidative steps likely performed by oxidoreductases M1, R1 and R2. Finally, in support of the identification of the cluster as being responsible for SQS1 production, the cluster contains a gene encoding a putative squalene synthase (SS) R6, suggesting a likely mechanism for self-resistance. This is NADP-dependent dehydrogenase M3 from Phoma sp. (strain ATCC 20986 / MF5453).